Reading from the N-terminus, the 129-residue chain is Glycine cleavage system H protein (129 aa).

Residues 24-106 (TFTVGITEHA…FGDGWLFRIK (83 aa)) enclose the Lipoyl-binding domain. Position 65 is an N6-lipoyllysine (Lys65).

Belongs to the GcvH family. As to quaternary structure, the glycine cleavage system is composed of four proteins: P, T, L and H. Requires (R)-lipoate as cofactor.

Functionally, the glycine cleavage system catalyzes the degradation of glycine. The H protein shuttles the methylamine group of glycine from the P protein to the T protein. The protein is Glycine cleavage system H protein of Pseudoalteromonas translucida (strain TAC 125).